A 941-amino-acid polypeptide reads, in one-letter code: Peroxisomal ATPase PEX6 (941 aa).

ATP-binding positions include 384 to 391 (GIPGCGKR) and 698 to 705 (GPPGTGKT).

The protein belongs to the AAA ATPase family. In terms of assembly, interacts with PEX1; forming the PEX1-PEX6 AAA ATPase complex, which is composed of a heterohexamer formed by a trimer of PEX1-PEX6 dimers. Interacts with APME9.

The protein localises to the cytoplasm. Its subcellular location is the cytosol. It localises to the peroxisome membrane. It catalyses the reaction ATP + H2O = ADP + phosphate + H(+). Its function is as follows. Component of the PEX1-PEX6 AAA ATPase complex, a protein dislocase complex that mediates the ATP-dependent extraction of the PEX5 receptor from peroxisomal membranes, an essential step for PEX5 recycling. Specifically recognizes PEX5 monoubiquitinated at 'Cys-11', and pulls it out of the peroxisome lumen through the PEX2-PEX10-PEX12 retrotranslocation channel. Extraction by the PEX1-PEX6 AAA ATPase complex is accompanied by unfolding of the TPR repeats and release of bound cargo from PEX5. Required for jasmonate biosynthesis. Necessary for the developmental elimination of obsolete peroxisome matix proteins. The protein is Peroxisomal ATPase PEX6 of Arabidopsis thaliana (Mouse-ear cress).